We begin with the raw amino-acid sequence, 217 residues long: Formate dehydrogenase, nitrate-inducible, cytochrome b556(Fdn) subunit (217 aa).

The Cytoplasmic segment spans residues methionine 1–lysine 11. The helical transmembrane segment at phenylalanine 12–phenylalanine 36 threads the bilayer. Histidine 18 contributes to the heme b binding site. The Periplasmic portion of the chain corresponds to phenylalanine 37–methionine 52. The helical transmembrane segment at glycine 53–arginine 74 threads the bilayer. Histidine 57 contributes to the heme b binding site. Residues phenylalanine 75–asparagine 110 are Cytoplasmic-facing. The helical transmembrane segment at alanine 111–isoleucine 134 threads the bilayer. Residues tryptophan 135–tyrosine 150 lie on the Periplasmic side of the membrane. Residues serine 151–tryptophan 175 form a helical membrane-spanning segment. Histidine 155 and histidine 169 together coordinate heme b. Histidine 169 lines the a menaquinone pocket. Over valine 176–isoleucine 217 the chain is Cytoplasmic.

Belongs to the formate dehydrogenase gamma subunit family. As to quaternary structure, trimer of heterotrimers, consisting of subunits alpha, beta and gamma. Heme is required as a cofactor.

It is found in the cell inner membrane. Functionally, formate dehydrogenase allows the bacterium to use formate as major electron donor during anaerobic respiration, when nitrate is used as electron acceptor. Subunit gamma is the cytochrome b556 component of the formate dehydrogenase-N, and also contains a menaquinone reduction site that receives electrons from the beta subunit (FdnH), through its hemes. Formate dehydrogenase-N is part of a system that generates proton motive force, together with the dissimilatory nitrate reductase (Nar). The polypeptide is Formate dehydrogenase, nitrate-inducible, cytochrome b556(Fdn) subunit (fdnI) (Escherichia coli O157:H7).